Consider the following 163-residue polypeptide: ATP synthase subunit b 1 (163 aa).

The chain crosses the membrane as a helical span at residues 7 to 27 (AETWVAVAFVILMALFAYLGV).

It belongs to the ATPase B chain family. In terms of assembly, F-type ATPases have 2 components, F(1) - the catalytic core - and F(0) - the membrane proton channel. F(1) has five subunits: alpha(3), beta(3), gamma(1), delta(1), epsilon(1). F(0) has three main subunits: a(1), b(2) and c(10-14). The alpha and beta chains form an alternating ring which encloses part of the gamma chain. F(1) is attached to F(0) by a central stalk formed by the gamma and epsilon chains, while a peripheral stalk is formed by the delta and b chains.

Its subcellular location is the cell inner membrane. In terms of biological role, f(1)F(0) ATP synthase produces ATP from ADP in the presence of a proton or sodium gradient. F-type ATPases consist of two structural domains, F(1) containing the extramembraneous catalytic core and F(0) containing the membrane proton channel, linked together by a central stalk and a peripheral stalk. During catalysis, ATP synthesis in the catalytic domain of F(1) is coupled via a rotary mechanism of the central stalk subunits to proton translocation. Component of the F(0) channel, it forms part of the peripheral stalk, linking F(1) to F(0). In Rhodopseudomonas palustris (strain BisB5), this protein is ATP synthase subunit b 1.